Consider the following 335-residue polypeptide: Cell division protein ZipA (335 aa).

Residues 1-6 (MENLQL) are Periplasmic-facing. Residues 7–27 (VLFVLGAVAIIAVLVHGFWSI) form a helical membrane-spanning segment. The Cytoplasmic segment spans residues 28–335 (RRQQPKSLKE…SYLQRIRAQM (308 aa)). 2 disordered regions span residues 37-128 (ESPM…NEEV) and 163-185 (RPAP…VSVE). A compositionally biased stretch (low complexity) spans 170–185 (APQSVAPASVEPVSVE).

It belongs to the ZipA family. Interacts with FtsZ via their C-terminal domains.

Its subcellular location is the cell inner membrane. In terms of biological role, essential cell division protein that stabilizes the FtsZ protofilaments by cross-linking them and that serves as a cytoplasmic membrane anchor for the Z ring. Also required for the recruitment to the septal ring of downstream cell division proteins. This Shewanella loihica (strain ATCC BAA-1088 / PV-4) protein is Cell division protein ZipA.